The primary structure comprises 155 residues: uncharacterized protein (155 aa).

Residues 1-23 form the signal peptide; that stretch reads MKIRSLSRFVLASTMFASFTASA.

This sequence to E.coli YkfB.

This is an uncharacterized protein from Escherichia coli (strain K12).